The chain runs to 456 residues: 3-isopropylmalate dehydratase large subunit (456 aa).

[4Fe-4S] cluster-binding residues include cysteine 336, cysteine 396, and cysteine 399.

It belongs to the aconitase/IPM isomerase family. LeuC type 1 subfamily. As to quaternary structure, heterodimer of LeuC and LeuD. It depends on [4Fe-4S] cluster as a cofactor.

It carries out the reaction (2R,3S)-3-isopropylmalate = (2S)-2-isopropylmalate. It functions in the pathway amino-acid biosynthesis; L-leucine biosynthesis; L-leucine from 3-methyl-2-oxobutanoate: step 2/4. Its function is as follows. Catalyzes the isomerization between 2-isopropylmalate and 3-isopropylmalate, via the formation of 2-isopropylmaleate. This chain is 3-isopropylmalate dehydratase large subunit, found in Staphylococcus epidermidis (strain ATCC 35984 / DSM 28319 / BCRC 17069 / CCUG 31568 / BM 3577 / RP62A).